Consider the following 199-residue polypeptide: uncharacterized protein (199 aa).

Residues Ala17–Ile37 traverse the membrane as a helical segment.

Its subcellular location is the membrane. This is an uncharacterized protein from Homo sapiens (Human).